The sequence spans 96 residues: ATP-dependent Clp protease adapter protein ClpS (96 aa).

Belongs to the ClpS family. Binds to the N-terminal domain of the chaperone ClpA.

Functionally, involved in the modulation of the specificity of the ClpAP-mediated ATP-dependent protein degradation. The polypeptide is ATP-dependent Clp protease adapter protein ClpS (Campylobacter jejuni subsp. jejuni serotype O:2 (strain ATCC 700819 / NCTC 11168)).